The sequence spans 500 residues: Glycerol kinase (500 aa).

T13 is a binding site for ADP. 3 residues coordinate ATP: T13, T14, and S15. T13 provides a ligand contact to sn-glycerol 3-phosphate. R17 provides a ligand contact to ADP. Positions 83, 84, 135, and 244 each coordinate sn-glycerol 3-phosphate. Residues R83, E84, Y135, D244, and Q245 each contribute to the glycerol site. ADP is bound by residues T266 and G309. ATP-binding residues include T266, G309, Q313, and G410. The ADP site is built by G410 and N414.

It belongs to the FGGY kinase family.

The enzyme catalyses glycerol + ATP = sn-glycerol 3-phosphate + ADP + H(+). The protein operates within polyol metabolism; glycerol degradation via glycerol kinase pathway; sn-glycerol 3-phosphate from glycerol: step 1/1. With respect to regulation, inhibited by fructose 1,6-bisphosphate (FBP). Its function is as follows. Key enzyme in the regulation of glycerol uptake and metabolism. Catalyzes the phosphorylation of glycerol to yield sn-glycerol 3-phosphate. This chain is Glycerol kinase, found in Burkholderia pseudomallei (strain K96243).